Reading from the N-terminus, the 876-residue chain is Leucine--tRNA ligase (876 aa).

The 'HIGH' region motif lies at 43–53 (PYPSGRIHMGH). The short motif at 632–636 (KMSKS) is the 'KMSKS' region element. Lysine 635 is an ATP binding site.

The protein belongs to the class-I aminoacyl-tRNA synthetase family.

It localises to the cytoplasm. It catalyses the reaction tRNA(Leu) + L-leucine + ATP = L-leucyl-tRNA(Leu) + AMP + diphosphate. The polypeptide is Leucine--tRNA ligase (Sinorhizobium fredii (strain NBRC 101917 / NGR234)).